Consider the following 367-residue polypeptide: Nuclear hormone receptor-like 1 (367 aa).

The nuclear receptor DNA-binding region spans 32–107 (GQPCVVCGDD…NGMTKSLVLN (76 aa)). NR C4-type zinc fingers lie at residues 35–55 (CVVC…CEGC) and 71–95 (CKSI…FQKC). In terms of domain architecture, NR LBD spans 145-367 (EFQSRIDQVT…IANILLFKFT (223 aa)).

The protein belongs to the nuclear hormone receptor family.

The protein localises to the nucleus. This chain is Nuclear hormone receptor-like 1 (nhr-1), found in Onchocerca volvulus.